The following is a 564-amino-acid chain: Arginine--tRNA ligase (564 aa).

A 'HIGH' region motif is present at residues 124–134; that stretch reads PNIAKDMHVGH.

It belongs to the class-I aminoacyl-tRNA synthetase family. Monomer.

It localises to the cytoplasm. It carries out the reaction tRNA(Arg) + L-arginine + ATP = L-arginyl-tRNA(Arg) + AMP + diphosphate. The polypeptide is Arginine--tRNA ligase (Chlamydia caviae (strain ATCC VR-813 / DSM 19441 / 03DC25 / GPIC) (Chlamydophila caviae)).